The following is a 377-amino-acid chain: Nitric oxide reductase FlRd-NAD(+) reductase (377 aa).

Belongs to the FAD-dependent oxidoreductase family. FAD serves as cofactor.

It is found in the cytoplasm. It carries out the reaction 2 reduced [nitric oxide reductase rubredoxin domain] + NAD(+) + H(+) = 2 oxidized [nitric oxide reductase rubredoxin domain] + NADH. It participates in nitrogen metabolism; nitric oxide reduction. One of at least two accessory proteins for anaerobic nitric oxide (NO) reductase. Reduces the rubredoxin moiety of NO reductase. The chain is Nitric oxide reductase FlRd-NAD(+) reductase from Escherichia fergusonii (strain ATCC 35469 / DSM 13698 / CCUG 18766 / IAM 14443 / JCM 21226 / LMG 7866 / NBRC 102419 / NCTC 12128 / CDC 0568-73).